The chain runs to 1014 residues: Klotho (1014 aa).

The first 35 residues, 1-35 (MPASAPPRRPRPPPPSLSLSLLLVLLGLAGRRLRA), serve as a signal peptide directing secretion. Over 36–983 (EPGDGAQTWA…ECSFFHTRKP (948 aa)) the chain is Extracellular. Glycosyl hydrolase-1 regions lie at residues 59–508 (FQGT…KNGF) and 517–955 (LEGT…SNGF). Residues Asn-161, Asn-285, Asn-346, Asn-609, Asn-614, and Asn-696 are each glycosylated (N-linked (GlcNAc...) asparagine). A helical transmembrane segment spans residues 984–1004 (LVAFIAFLFFAFIVSLSLIFY). The Cytoplasmic portion of the chain corresponds to 1005–1014 (YSKKGRRRYQ).

Belongs to the glycosyl hydrolase 1 family. Klotho subfamily. As to quaternary structure, homodimer. Interacts with FGF23 and FGFR1.

The protein localises to the cell membrane. It localises to the apical cell membrane. The protein resides in the secreted. It catalyses the reaction a beta-D-glucuronoside + H2O = D-glucuronate + an alcohol. Its function is as follows. May have weak glycosidase activity towards glucuronylated steroids. However, it lacks essential active site Glu residues at positions 241 and 874, suggesting it may be inactive as a glycosidase in vivo. May be involved in the regulation of calcium and phosphorus homeostasis by inhibiting the synthesis of active vitamin D. Essential factor for the specific interaction between FGF23 and FGFR1. Functionally, the Klotho peptide generated by cleavage of the membrane-bound isoform may be an anti-aging circulating hormone which would extend life span by inhibiting insulin/IGF1 signaling. In Macaca fascicularis (Crab-eating macaque), this protein is Klotho (KL).